The primary structure comprises 114 residues: Apokedarcidin (114 aa).

Cystine bridges form between C37–C47 and C88–C95.

This sequence belongs to the neocarzinostatin family.

Functionally, binds non-covalently to an enediyne chromophore which is the cytotoxic and mutagenic component of the antibiotic. The chromophore cleaves duplex DNA site-specifically in a single-stranded manner. The apoprotein cleaves proteins selectively, in particular highly basic histones, with H1 proteins being cleaved the more readily. This is Apokedarcidin from Actinomycete sp. (strain L585-6 / ATCC 53650).